The following is a 218-amino-acid chain: uncharacterized protein (218 aa).

One can recognise a Toprim domain in the interval 111–193 (NSIYLVEGDF…ITKVIEIKAA (83 aa)).

This is an uncharacterized protein from Mycoplasma genitalium (strain ATCC 33530 / DSM 19775 / NCTC 10195 / G37) (Mycoplasmoides genitalium).